The primary structure comprises 476 residues: Eukaryotic translation initiation factor 3 subunit L (476 aa).

The PCI domain maps to 257-452 (DAIRMFSHIL…DLDYALENDL (196 aa)).

Belongs to the eIF-3 subunit L family. Component of the eukaryotic translation initiation factor 3 (eIF-3) complex.

The protein localises to the cytoplasm. Functionally, component of the eukaryotic translation initiation factor 3 (eIF-3) complex, which is involved in protein synthesis of a specialized repertoire of mRNAs and, together with other initiation factors, stimulates binding of mRNA and methionyl-tRNAi to the 40S ribosome. The eIF-3 complex specifically targets and initiates translation of a subset of mRNAs involved in cell proliferation. The polypeptide is Eukaryotic translation initiation factor 3 subunit L (Aspergillus niger (strain ATCC MYA-4892 / CBS 513.88 / FGSC A1513)).